Consider the following 242-residue polypeptide: Probable transcriptional regulatory protein Bmul_0984/BMULJ_02280 (242 aa).

This sequence belongs to the TACO1 family.

The protein localises to the cytoplasm. The polypeptide is Probable transcriptional regulatory protein Bmul_0984/BMULJ_02280 (Burkholderia multivorans (strain ATCC 17616 / 249)).